A 69-amino-acid chain; its full sequence is DNA-directed RNA polymerase subunit epsilon (69 aa).

It belongs to the RNA polymerase subunit epsilon family. As to quaternary structure, RNAP is composed of a core of 2 alpha, a beta and a beta' subunit. The core is associated with a delta subunit, and at least one of epsilon or omega. When a sigma factor is associated with the core the holoenzyme is formed, which can initiate transcription.

It catalyses the reaction RNA(n) + a ribonucleoside 5'-triphosphate = RNA(n+1) + diphosphate. Its function is as follows. A non-essential component of RNA polymerase (RNAP). This Halalkalibacterium halodurans (strain ATCC BAA-125 / DSM 18197 / FERM 7344 / JCM 9153 / C-125) (Bacillus halodurans) protein is DNA-directed RNA polymerase subunit epsilon.